The following is a 131-amino-acid chain: Protein yippee-like PJ691.02 (131 aa).

A Yippee domain is found at 12–109 (RCYVCAKCKT…LEMQDAVLQR (98 aa)). Residues Cys-16, Cys-19, Cys-72, and Cys-75 each coordinate Zn(2+).

The protein belongs to the yippee family.

This Schizosaccharomyces pombe (strain 972 / ATCC 24843) (Fission yeast) protein is Protein yippee-like PJ691.02.